The primary structure comprises 204 residues: Probable molybdenum cofactor guanylyltransferase (204 aa).

GTP contacts are provided by residues 10–12 (LSG), Lys-22, Asp-75, and Asp-104. Asp-104 contributes to the Mg(2+) binding site.

This sequence belongs to the MobA family. The cofactor is Mg(2+).

The protein localises to the cytoplasm. The catalysed reaction is Mo-molybdopterin + GTP + H(+) = Mo-molybdopterin guanine dinucleotide + diphosphate. Its function is as follows. Transfers a GMP moiety from GTP to Mo-molybdopterin (Mo-MPT) cofactor (Moco or molybdenum cofactor) to form Mo-molybdopterin guanine dinucleotide (Mo-MGD) cofactor. In Methanocaldococcus jannaschii (strain ATCC 43067 / DSM 2661 / JAL-1 / JCM 10045 / NBRC 100440) (Methanococcus jannaschii), this protein is Probable molybdenum cofactor guanylyltransferase.